Here is a 621-residue protein sequence, read N- to C-terminus: TOX high mobility group box family member 4 (621 aa).

Disordered stretches follow at residues 153–227 (LGLS…QKPV) and 305–333 (LDPA…ASIE). Phosphothreonine is present on Thr-176. 3 positions are modified to phosphoserine: Ser-178, Ser-181, and Ser-182. The segment covering 183–193 (LHEDGVEDFRR) has biased composition (basic and acidic residues). The span at 208–218 (KQKAPKKRKKK) shows a compositional bias: basic residues. The short motif at 213–218 (KKRKKK) is the Nuclear localization signal element. A DNA-binding region (HMG box) is located at residues 223 to 291 (PQKPVSAYAL…EYLKALAAYK (69 aa)). Residues 307–319 (PAPPSQTPSPPPM) are compositionally biased toward pro residues. Thr-313 carries the post-translational modification Phosphothreonine. The residue at position 315 (Ser-315) is a Phosphoserine. A compositionally biased stretch (low complexity) spans 320–333 (ATVDPASPAPASIE). Residue Arg-481 is modified to Asymmetric dimethylarginine. A disordered region spans residues 510 to 529 (PTVESSPERPMNNSPEAHTV). Phosphoserine is present on residues Ser-533, Ser-550, Ser-552, Ser-560, Ser-562, and Ser-567.

In terms of assembly, component of the PNUTS-PP1 phosphatase complex, composed of PPP1R10/PNUTS, TOX4, WDR82 and PPP1CA or PPP1CB or PPP1CC. Interacts with PPP1R10/PNUTS. Interacts with FOXO1 and CREB1 (increased by cAMP); FOXO1 and CREB1 are required for full induction of TOX4-dependent activity and the interactions are inhibited by insulin.

It localises to the nucleus. The protein localises to the chromosome. Its activity is regulated as follows. In liver, recruited to target gene promoters following treatment with dexamethasone and cAMP. Binding is decreased in presence of insulin. Transcription factor that modulates cell fate reprogramming from the somatic state to the pluripotent and neuronal fate. In liver, controls the expression of hormone-regulated gluconeogenic genes such as G6PC1 and PCK1. This regulation is independent of the insulin receptor activation. Also acts as a regulatory component of protein phosphatase 1 (PP1) complexes. Component of the PNUTS-PP1 protein phosphatase complex, a PP1 complex that regulates RNA polymerase II transcription pause-release. PNUTS-PP1 also plays a role in the control of chromatin structure and cell cycle progression during the transition from mitosis into interphase. This chain is TOX high mobility group box family member 4 (TOX4), found in Pongo abelii (Sumatran orangutan).